The primary structure comprises 262 residues: Hydroxyacylglutathione hydrolase (262 aa).

7 residues coordinate Zn(2+): His-53, His-55, Asp-57, His-58, His-111, Asp-128, and His-166.

The protein belongs to the metallo-beta-lactamase superfamily. Glyoxalase II family. In terms of assembly, monomer. The cofactor is Zn(2+).

The enzyme catalyses an S-(2-hydroxyacyl)glutathione + H2O = a 2-hydroxy carboxylate + glutathione + H(+). The protein operates within secondary metabolite metabolism; methylglyoxal degradation; (R)-lactate from methylglyoxal: step 2/2. Thiolesterase that catalyzes the hydrolysis of S-D-lactoyl-glutathione to form glutathione and D-lactic acid. The protein is Hydroxyacylglutathione hydrolase of Nitrosomonas europaea (strain ATCC 19718 / CIP 103999 / KCTC 2705 / NBRC 14298).